A 102-amino-acid chain; its full sequence is Aspartyl/glutamyl-tRNA(Asn/Gln) amidotransferase subunit C (102 aa).

This sequence belongs to the GatC family. In terms of assembly, heterotrimer of A, B and C subunits.

It catalyses the reaction L-glutamyl-tRNA(Gln) + L-glutamine + ATP + H2O = L-glutaminyl-tRNA(Gln) + L-glutamate + ADP + phosphate + H(+). It carries out the reaction L-aspartyl-tRNA(Asn) + L-glutamine + ATP + H2O = L-asparaginyl-tRNA(Asn) + L-glutamate + ADP + phosphate + 2 H(+). Functionally, allows the formation of correctly charged Asn-tRNA(Asn) or Gln-tRNA(Gln) through the transamidation of misacylated Asp-tRNA(Asn) or Glu-tRNA(Gln) in organisms which lack either or both of asparaginyl-tRNA or glutaminyl-tRNA synthetases. The reaction takes place in the presence of glutamine and ATP through an activated phospho-Asp-tRNA(Asn) or phospho-Glu-tRNA(Gln). This is Aspartyl/glutamyl-tRNA(Asn/Gln) amidotransferase subunit C from Bordetella avium (strain 197N).